The primary structure comprises 160 residues: S-protein homolog 13 (160 aa).

The N-terminal stretch at 1–27 is a signal peptide; sequence MGRDLGWCFFVATVLLAAVLLPAPTIA.

Belongs to the plant self-incompatibility (S1) protein family.

The protein resides in the secreted. In Arabidopsis thaliana (Mouse-ear cress), this protein is S-protein homolog 13.